The primary structure comprises 163 residues: Cyclic pyranopterin monophosphate synthase (163 aa).

Substrate-binding positions include 75–77 (MCH) and 115–116 (ME). The active site involves Asp130.

Belongs to the MoaC family. In terms of assembly, homohexamer; trimer of dimers.

It carries out the reaction (8S)-3',8-cyclo-7,8-dihydroguanosine 5'-triphosphate = cyclic pyranopterin phosphate + diphosphate. It functions in the pathway cofactor biosynthesis; molybdopterin biosynthesis. In terms of biological role, catalyzes the conversion of (8S)-3',8-cyclo-7,8-dihydroguanosine 5'-triphosphate to cyclic pyranopterin monophosphate (cPMP). The sequence is that of Cyclic pyranopterin monophosphate synthase from Bacillus pumilus (strain SAFR-032).